The sequence spans 202 residues: Large ribosomal subunit protein uL4 (202 aa).

A compositionally biased stretch (polar residues) spans 42–52; the sequence is GTKAQKSRSQV. The segment at 42 to 70 is disordered; it reads GTKAQKSRSQVSGTTKKSKKQKGGGARHG.

Belongs to the universal ribosomal protein uL4 family. Part of the 50S ribosomal subunit.

In terms of biological role, one of the primary rRNA binding proteins, this protein initially binds near the 5'-end of the 23S rRNA. It is important during the early stages of 50S assembly. It makes multiple contacts with different domains of the 23S rRNA in the assembled 50S subunit and ribosome. Its function is as follows. Forms part of the polypeptide exit tunnel. This Xylella fastidiosa (strain Temecula1 / ATCC 700964) protein is Large ribosomal subunit protein uL4.